Reading from the N-terminus, the 73-residue chain is UPF0154 protein BcerKBAB4_3367 (73 aa).

Residues 4-24 form a helical membrane-spanning segment; the sequence is WLGILVGVVALVAGVALGFFI.

Belongs to the UPF0154 family.

It localises to the cell membrane. This Bacillus mycoides (strain KBAB4) (Bacillus weihenstephanensis) protein is UPF0154 protein BcerKBAB4_3367.